The chain runs to 356 residues: MKREQLIQNIEKLKHIMPSYVLEYYQSKLTIPYSLNTLYEYLKEYERFFSWLVDSGVADVDKITDVSLSVLENLTKRDLESFILYLRERPRLNTRSTRYGVSQTTINRTLSALSSLYKYLTEEVENEDGEPYFYRNVMKKVQTKKKSETLASRAENIKGKLFLGDETQGFLDYIDNEYEKTLSNRARSSFFKNKERDLAIIALILASGIRLSEAVNVDLRDLNLITMVVEVTRKGGKRDAVPYAPFAKTYFERYLEVRSQRYKTTAKDTAFFVTLYRDVPSRIDPSSVEKLVAKYSQAFKVRVTPHKLRHTLATRLYAQTNSQVLVSNQLGHASTQVTDLYTHIINEEQKNALDNL.

One can recognise a Core-binding (CB) domain in the interval 16–121 (IMPSYVLEYY…ALSSLYKYLT (106 aa)). In terms of domain architecture, Tyr recombinase spans 169 to 354 (GFLDYIDNEY…INEEQKNALD (186 aa)). Catalysis depends on residues arginine 210, lysine 234, histidine 306, arginine 309, and histidine 332. The active-site O-(3'-phospho-DNA)-tyrosine intermediate is tyrosine 341.

It belongs to the 'phage' integrase family. XerS subfamily.

The protein resides in the cytoplasm. FtsK is required for recombination. Its function is as follows. Site-specific tyrosine recombinase, which acts by catalyzing the cutting and rejoining of the recombining DNA molecules. Essential to convert dimers of the bacterial chromosome into monomers to permit their segregation at cell division. This Lactococcus lactis subsp. lactis (strain IL1403) (Streptococcus lactis) protein is Tyrosine recombinase XerS.